Reading from the N-terminus, the 194-residue chain is Fe/S biogenesis protein NfuA (194 aa).

The [4Fe-4S] cluster site is built by Cys-152 and Cys-155.

This sequence belongs to the NfuA family. Homodimer. [4Fe-4S] cluster serves as cofactor.

Functionally, involved in iron-sulfur cluster biogenesis. Binds a 4Fe-4S cluster, can transfer this cluster to apoproteins, and thereby intervenes in the maturation of Fe/S proteins. Could also act as a scaffold/chaperone for damaged Fe/S proteins. This Azotobacter vinelandii (strain DJ / ATCC BAA-1303) protein is Fe/S biogenesis protein NfuA.